The sequence spans 437 residues: tRNA modification GTPase MnmE (437 aa).

(6S)-5-formyl-5,6,7,8-tetrahydrofolate is bound by residues arginine 21, glutamate 79, and arginine 119. Residues 223–364 (GFRVVLAGPP…FRSALIAHAR (142 aa)) form the TrmE-type G domain. GTP is bound by residues 233 to 238 (NAGKST), 252 to 258 (AAEPGTT), and 277 to 280 (DTAG). Positions 237 and 258 each coordinate Mg(2+). Lysine 437 lines the (6S)-5-formyl-5,6,7,8-tetrahydrofolate pocket.

This sequence belongs to the TRAFAC class TrmE-Era-EngA-EngB-Septin-like GTPase superfamily. TrmE GTPase family. Homodimer. Heterotetramer of two MnmE and two MnmG subunits. It depends on K(+) as a cofactor.

The protein localises to the cytoplasm. Functionally, exhibits a very high intrinsic GTPase hydrolysis rate. Involved in the addition of a carboxymethylaminomethyl (cmnm) group at the wobble position (U34) of certain tRNAs, forming tRNA-cmnm(5)s(2)U34. The chain is tRNA modification GTPase MnmE from Novosphingobium aromaticivorans (strain ATCC 700278 / DSM 12444 / CCUG 56034 / CIP 105152 / NBRC 16084 / F199).